The chain runs to 1148 residues: Small G protein signaling modulator 1 (1148 aa).

The RUN domain occupies 36–190; the sequence is HEDSSHIISF…EYTKMKTADH (155 aa). Residues 256–297 form an important for interaction with RAB9A and RAB9B region; the sequence is LLYGKNNVLVQPRDDMEAVPGYLSLHQTADVMTLKWTPNQLM. Residues 301 to 350 are required for interaction with RAP family members; it reads VGDLDYEKSVYWDYAMTIRLEEIVYLHCHQQVDSGGTVVLVSQDGIQRPP. Disordered regions lie at residues 377–411, 700–830, and 871–894; these read DPPL…DKDD, DSTI…PREE, and GWRS…EEPE. Positions 385–397 are enriched in basic residues; sequence GKGKVFPKLRKRS. A Rab-GAP TBC domain is found at 617–1081; that stretch reads GIQPEIRKAV…LVWETIWAAK (465 aa). Residues 702-716 show a composition bias toward polar residues; the sequence is TISNESSQSCSSGRQ. Over residues 742-751 the composition is skewed to basic and acidic residues; it reads AEGRLEEKQP. Over residues 757-802 the composition is skewed to polar residues; sequence NLVNGTCSPDSGHPSSHNFSSGLSEHSEPSLSTEDSVLDAQRNTPT. 2 stretches are compositionally biased toward basic and acidic residues: residues 805-816 and 871-883; these read RPRDGSVDDRQS and GWRS…HGQA. Acidic residues predominate over residues 884-894; the sequence is DSEDNLSEEPE.

This sequence belongs to the RUTBC family. Interacts with RAB9A (GTP-bound form) and RAB9B (GTP-bound form); has much lower affinity for GDP-bound RAB9A and RAB9B. Interacts with RAB3A, RAB4A, RAB5A, RAB8A, RAB11A, RAP1A, RAP1B, RAP2A and RAP2B. No interaction with RAB27A. Mainly expressed in brain, heart and testis.

Its subcellular location is the golgi apparatus. The protein resides in the trans-Golgi network. It is found in the cytoplasmic vesicle membrane. The protein localises to the cytoplasm. Its function is as follows. Interacts with numerous Rab family members, functioning as Rab effector for some, and as GTPase activator for others. Promotes GTP hydrolysis by RAB34 and RAB36. Probably functions as a GTPase effector with RAB9A and RAB9B; does not stimulate GTP hydrolysis with RAB9A and RAB9B. The chain is Small G protein signaling modulator 1 (SGSM1) from Homo sapiens (Human).